We begin with the raw amino-acid sequence, 210 residues long: Proteasome subunit beta 2 (210 aa).

A propeptide spans 1-12 (MSNNVEEKILHG) (removed in mature form; by autocatalysis). The Nucleophile role is filled by T13.

It belongs to the peptidase T1B family. As to quaternary structure, the 20S proteasome core is composed of 14 alpha and 14 beta subunits that assemble into four stacked heptameric rings, resulting in a barrel-shaped structure. The two inner rings, each composed of seven catalytic beta subunits, are sandwiched by two outer rings, each composed of seven alpha subunits. The catalytic chamber with the active sites is on the inside of the barrel. Has a gated structure, the ends of the cylinder being occluded by the N-termini of the alpha-subunits. Is capped at one or both ends by the proteasome regulatory ATPase, PAN.

It is found in the cytoplasm. The catalysed reaction is Cleavage of peptide bonds with very broad specificity.. The formation of the proteasomal ATPase PAN-20S proteasome complex, via the docking of the C-termini of PAN into the intersubunit pockets in the alpha-rings, triggers opening of the gate for substrate entry. Interconversion between the open-gate and close-gate conformations leads to a dynamic regulation of the 20S proteasome proteolysis activity. Its function is as follows. Component of the proteasome core, a large protease complex with broad specificity involved in protein degradation. This chain is Proteasome subunit beta 2, found in Cenarchaeum symbiosum (strain A).